We begin with the raw amino-acid sequence, 315 residues long: DNA-directed RNA polymerase subunit alpha (315 aa).

An alpha N-terminal domain (alpha-NTD) region spans residues 1–228 (MLEIEKPKIE…EHLRLFIGLT (228 aa)). Positions 245–315 (KDKILEMTIE…LGLGFRKADD (71 aa)) are alpha C-terminal domain (alpha-CTD).

The protein belongs to the RNA polymerase alpha chain family. Homodimer. The RNAP catalytic core consists of 2 alpha, 1 beta, 1 beta' and 1 omega subunit. When a sigma factor is associated with the core the holoenzyme is formed, which can initiate transcription.

The catalysed reaction is RNA(n) + a ribonucleoside 5'-triphosphate = RNA(n+1) + diphosphate. Functionally, DNA-dependent RNA polymerase catalyzes the transcription of DNA into RNA using the four ribonucleoside triphosphates as substrates. This chain is DNA-directed RNA polymerase subunit alpha, found in Desulfitobacterium hafniense (strain DSM 10664 / DCB-2).